The following is an 85-amino-acid chain: High-potential iron-sulfur protein (85 aa).

[4Fe-4S] cluster contacts are provided by Cys43, Cys46, Cys63, and Cys77.

The protein belongs to the high-potential iron-sulfur protein (HiPIP) family. As to quaternary structure, homodimer.

The protein resides in the periplasm. Its function is as follows. Specific class of high-redox-potential 4Fe-4S ferredoxins. Functions in anaerobic electron transport in most purple and in some other photosynthetic bacteria and in at least one genus (Paracoccus) of halophilic, denitrifying bacteria. The protein is High-potential iron-sulfur protein of Allochromatium warmingii (Chromatium warmingii).